The chain runs to 269 residues: MHITEIAKVVEQVRKTNPLVHNITNVVVTNFTANGLLALGASPVMAYAKEEVAEMASIAGALVLNMGTLRPDEVEAMLIAGKAANQQHVPVLFDPVGAGATLYRTEVARHIPNEIKLAMIRGNAAEIANVIHEKWEIKGVDAGTGNGDSVAIATKAANKLGTVAVITGKEDIVTDGKRTVIIRNGHPILTKVTGTGCLLTSVMGAFVAVEQDYVKAAVAALTFYGVAAEIAASKTVDQGPGSFQVEFLNQLANVTVSDIEQYGKAEEVR.

Residue Met-45 coordinates substrate. Residues Arg-121 and Thr-167 each coordinate ATP. Substrate is bound at residue Gly-194.

It belongs to the Thz kinase family. Requires Mg(2+) as cofactor.

It catalyses the reaction 5-(2-hydroxyethyl)-4-methylthiazole + ATP = 4-methyl-5-(2-phosphooxyethyl)-thiazole + ADP + H(+). It participates in cofactor biosynthesis; thiamine diphosphate biosynthesis; 4-methyl-5-(2-phosphoethyl)-thiazole from 5-(2-hydroxyethyl)-4-methylthiazole: step 1/1. Catalyzes the phosphorylation of the hydroxyl group of 4-methyl-5-beta-hydroxyethylthiazole (THZ). In Bacillus cytotoxicus (strain DSM 22905 / CIP 110041 / 391-98 / NVH 391-98), this protein is Hydroxyethylthiazole kinase.